Consider the following 237-residue polypeptide: Pheromone-regulated membrane protein 8 (237 aa).

Residues 1-47 lie on the Cytoplasmic side of the membrane; that stretch reads MQTPSENTNAKSDSLDEPGAYLIEENVALPKDIFHSYLSYWIYEAAH. The chain crosses the membrane as a helical span at residues 48-68; that stretch reads CTPVMLLSLVIGVLISIIILF. The Extracellular portion of the chain corresponds to 69–74; it reads HDNENC. A helical membrane pass occupies residues 75–95; the sequence is VGVSVGFLLIFSGILVIVLIL. The Cytoplasmic segment spans residues 96 to 237; the sequence is RFGPQISDED…QEYPGVDEFF (142 aa). The disordered stretch occupies residues 174-201; the sequence is SSASNVKDAQSNDETAGTPNEAAESSSF. Residues 236-237 form a COPII binding region; the sequence is FF.

The protein belongs to the DUP/COS family. As to quaternary structure, interacts with PRM9. Binds to SEC23/24 of COPII coated vesicles.

Its subcellular location is the membrane. It localises to the endoplasmic reticulum. Its function is as follows. May be involved in endoplasmic reticulum exit trafficking of proteins. This Saccharomyces cerevisiae (strain ATCC 204508 / S288c) (Baker's yeast) protein is Pheromone-regulated membrane protein 8 (PRM8).